The chain runs to 396 residues: ATP-dependent RNA helicase FAL1 (396 aa).

The short motif at 23 to 51 is the Q motif element; it reads PTFEALNLKEDLLRGIYAYNFEKPSAIQQ. Residues 54–224 form the Helicase ATP-binding domain; that stretch reads IIPIIRGRDV…TKFMTDPVRI (171 aa). Residue 67–74 coordinates ATP; the sequence is AQSGTGKT. The DEAD box motif lies at 172-175; it reads DESD. The 162-residue stretch at 235-396 folds into the Helicase C-terminal domain; it reads GIKQFFVAVE…EMPMNVAELT (162 aa).

Belongs to the DEAD box helicase family. DDX48/FAL1 subfamily.

It localises to the nucleus. It is found in the nucleolus. The catalysed reaction is ATP + H2O = ADP + phosphate + H(+). Functionally, ATP-dependent RNA helicase involved in 40S ribosomal subunit biogenesis. Required for the processing and cleavage of 35S pre-rRNA at sites A0, A1, and A2, leading to mature 18S rRNA. This Cryptococcus neoformans var. neoformans serotype D (strain B-3501A) (Filobasidiella neoformans) protein is ATP-dependent RNA helicase FAL1 (FAL1).